Consider the following 131-residue polypeptide: Large ribosomal subunit protein bL19 (131 aa).

The protein belongs to the bacterial ribosomal protein bL19 family.

Its function is as follows. This protein is located at the 30S-50S ribosomal subunit interface and may play a role in the structure and function of the aminoacyl-tRNA binding site. In Afipia carboxidovorans (strain ATCC 49405 / DSM 1227 / KCTC 32145 / OM5) (Oligotropha carboxidovorans), this protein is Large ribosomal subunit protein bL19.